The sequence spans 95 residues: Mammaglobin-B (95 aa).

An N-terminal signal peptide occupies residues 1–18 (MKLLMVLMLAALLLHCYA). N68 carries N-linked (GlcNAc...) asparagine glycosylation.

In terms of assembly, heterodimer of a lipophilin A and a lipophilin C (mammaglobin B) monomer associated head to head. Expressed in thymus, trachea, kidney, steroid responsive tissues (prostate, testis, uterus, breast and ovary) and salivary gland.

The protein resides in the secreted. Functionally, may bind androgens and other steroids, may also bind estramustine, a chemotherapeutic agent used for prostate cancer. May be under transcriptional regulation of steroid hormones. This is Mammaglobin-B (SCGB2A1) from Homo sapiens (Human).